Consider the following 64-residue polypeptide: Large ribosomal subunit protein bL33 (64 aa).

This sequence belongs to the bacterial ribosomal protein bL33 family.

In Crocosphaera subtropica (strain ATCC 51142 / BH68) (Cyanothece sp. (strain ATCC 51142)), this protein is Large ribosomal subunit protein bL33.